The following is an 806-amino-acid chain: DNA topoisomerase 4 subunit A (806 aa).

The Topo IIA-type catalytic domain occupies 33-499; that stretch reads LPDARDGLKP…EEIKINLEVM (467 aa). The O-(5'-phospho-DNA)-tyrosine intermediate role is filled by Tyr-121.

This sequence belongs to the type II topoisomerase GyrA/ParC subunit family. ParC type 2 subfamily. In terms of assembly, heterotetramer composed of ParC and ParE.

It is found in the cell membrane. The protein resides in the cytoplasm. It carries out the reaction ATP-dependent breakage, passage and rejoining of double-stranded DNA.. Its function is as follows. Topoisomerase IV is essential for chromosome segregation. It relaxes supercoiled DNA. Performs the decatenation events required during the replication of a circular DNA molecule. This chain is DNA topoisomerase 4 subunit A, found in Bacillus subtilis (strain 168).